The chain runs to 3619 residues: BEACH domain-containing protein lvsA (3619 aa).

Disordered regions lie at residues 1–117, 648–709, 1101–1129, 1367–1390, 1636–1658, 1893–1924, and 1964–1999; these read MFRR…NNNN, KIDD…EKEA, NNNN…NNDQ, SPNL…NSKK, IPTP…RKSI, SSIS…PTSG, and QQAA…NTPN. Over residues 17–30 the composition is skewed to pro residues; the sequence is PQVPHSPGHPPHQP. 8 stretches are compositionally biased toward low complexity: residues 31–59, 68–87, 97–117, 656–689, 1101–1127, 1375–1387, 1640–1652, and 1893–1923; these read PQQQ…QQPQ, SVSS…SFSS, EESS…NNNN, NNNN…NEEN, NNNN…NNNN, NNNN…GGSN, SSSS…SSTS, and SSIS…TPTS. A WD 1 repeat occupies 94 to 133; that stretch reads SATEESSSINSNNNNNNNKNNNNNNNSNIIESNINVWTIM. The span at 1974–1986 shows a compositional bias: polar residues; that stretch reads MSIQSSPFQSKNL. The stretch at 2234–2258 forms a coiled coil; that stretch reads VKILEKLEADRVGLQKTVQSLYKSL. The WD 2 repeat unit spans residues 2294-2335; sequence LDSDFMNAFCYPLYKLVISDQHEHVDNSIKLWRLLLSLKTSS. Disordered stretches follow at residues 2403–2457 and 2596–2785; these read KKQH…ITKK and NTSS…SEDE. Basic and acidic residues predominate over residues 2440-2452; that stretch reads DRKDQSHQEEKSK. Low complexity predominate over residues 2596–2662; that stretch reads NTSSITNNNN…TTTPQQSSSQ (67 aa). Composition is skewed to polar residues over residues 2663–2687 and 2694–2725; these read IKVS…SSSE and KLQS…SEEN. Composition is skewed to low complexity over residues 2726-2735 and 2742-2764; these read SSLTSASTTL and TQTT…TTTT. Residues 2807–2932 form the BEACH-type PH domain; sequence KDPRLNGIMY…TRDEVYHTLV (126 aa). Residues 2940-2971 are disordered; that stretch reads TIGGDAQGITGGQTGNDDNDDHHGGGGGRGVR. A compositionally biased stretch (gly residues) spans 2944-2953; that stretch reads DAQGITGGQT. Residues 2959 to 2971 are compositionally biased toward basic and acidic residues; sequence DDHHGGGGGRGVR. The region spanning 2972–3270 is the BEACH domain; sequence DRFTSIWRKS…QLFDKPHPKR (299 aa). WD repeat units lie at residues 3347–3386, 3389–3428, 3431–3471, 3474–3518, and 3563–3602; these read HHDG…LAKR, GHTG…YVRS, AHEG…NYKT, IAND…LPDN, and SHST…QVKQ. The tract at residues 3516 to 3539 is disordered; it reads PDNNNSNNNNNNNNNNNNNATQIP. Residues 3518–3534 are compositionally biased toward low complexity; that stretch reads NNNSNNNNNNNNNNNNN.

The protein localises to the contractile vacuole membrane. In terms of biological role, involved in myosin-independent cytokinesis and early steps of phagocytosis. Also involved in contractile vacuole-mediated osmoregulation. The protein is BEACH domain-containing protein lvsA (lvsA) of Dictyostelium discoideum (Social amoeba).